Reading from the N-terminus, the 652-residue chain is Adhesion G protein-coupled receptor E3 (652 aa).

The signal sequence occupies residues 1 to 21 (MQGPLLLPGLCFLLSLFGAVT). Topologically, residues 22–357 (QKTKTSCAKC…TSQEEDPVLT (336 aa)) are extracellular. The region spanning 24–66 (TKTSCAKCPPNASCVNNTHCTCNHGYTSGSGQKLFTFPLETCN) is the EGF-like 1 domain. 6 disulfides stabilise this stretch: cysteine 28–cysteine 37, cysteine 31–cysteine 43, cysteine 45–cysteine 65, cysteine 71–cysteine 85, cysteine 79–cysteine 94, and cysteine 96–cysteine 117. Asparagine 34 and asparagine 39 each carry an N-linked (GlcNAc...) asparagine glycan. The EGF-like 2; calcium-binding domain occupies 67-118 (DINECTPPYSVYCGFNAVCYNVEGSFYCQCVPGYRLHSGNEQFSNSNENTCQ). N-linked (GlcNAc...) asparagine glycosylation is found at asparagine 145, asparagine 189, asparagine 202, asparagine 250, asparagine 279, asparagine 327, and asparagine 334. A GAIN-B domain is found at 183–351 (KVLKIQNDSV…AVLMALTSQE (169 aa)). 2 cysteine pairs are disulfide-bonded: cysteine 304-cysteine 333 and cysteine 321-cysteine 335. Positions 304–351 (CVYWKSTGQGSQWSRDGCFLIHVNKSHTMCNCSHLSSFAVLMALTSQE) are GPS. Residues 358–378 (VITYVGLSVSLLCLLLAALTF) form a helical membrane-spanning segment. Topologically, residues 379–389 (LLCKAIRNTST) are cytoplasmic. Residues 390 to 410 (SLHLQLSLCLFLAHLLFLVGI) traverse the membrane as a helical segment. The Extracellular portion of the chain corresponds to 411-416 (DRTEPK). Residues 417–437 (VLCSIIAGALHYLYLAAFTWM) traverse the membrane as a helical segment. The Cytoplasmic segment spans residues 438–464 (LLEGVHLFLTARNLTVVNYSSINRLMK). Residues 465-485 (WIMFPVGYGVPAVTVAISAAS) traverse the membrane as a helical segment. Residues 486-508 (WPHLYGTADRCWLHLDQGFMWSF) lie on the Extracellular side of the membrane. A helical transmembrane segment spans residues 509–529 (LGPVCAIFSANLVLFILVFWI). The Cytoplasmic segment spans residues 530-557 (LKRKLSSLNSEVSTIQNTRMLAFKATAQ). The helical transmembrane segment at 558 to 578 (LFILGCTWCLGLLQVGPAAQV) threads the bilayer. Residues 579 to 580 (MA) are Extracellular-facing. The chain crosses the membrane as a helical span at residues 581–601 (YLFTIINSLQGFFIFLVYCLL). Residues 602–652 (SQQVQKQYQKWFREIVKSKSESETYTLSSKMGPDSKPSEGDVFPGQVKRKY) are Cytoplasmic-facing. The segment at 621–652 (SESETYTLSSKMGPDSKPSEGDVFPGQVKRKY) is disordered.

This sequence belongs to the G-protein coupled receptor 2 family. Adhesion G-protein coupled receptor (ADGR) subfamily. As to quaternary structure, forms a heterodimer, consisting of a large extracellular region (alpha subunit) non-covalently linked to a seven-transmembrane moiety (beta subunit). Post-translationally, proteolytically cleaved into 2 subunits, an extracellular alpha subunit and a seven-transmembrane subunit. As to expression, displays a predominantly leukocyte-restricted expression, with highest levels in neutrophils, monocytes and macrophages.

It localises to the cell membrane. It is found in the secreted. In terms of biological role, orphan receptor that may play a role myeloid-myeloid interactions during immune and inflammatory responses. A ligand for the soluble form of this receptor is present at the surface of monocytes-derived macrophages and activated neutrophils. This chain is Adhesion G protein-coupled receptor E3, found in Homo sapiens (Human).